The chain runs to 92 residues: Acylphosphatase (92 aa).

The region spanning 5–92 is the Acylphosphatase-like domain; that stretch reads RAHVFISGRV…GKEGIFTIVW (88 aa). Residues Arg20 and Asn38 contribute to the active site.

It belongs to the acylphosphatase family.

It carries out the reaction an acyl phosphate + H2O = a carboxylate + phosphate + H(+). This Chloroflexus aurantiacus (strain ATCC 29366 / DSM 635 / J-10-fl) protein is Acylphosphatase (acyP).